Consider the following 99-residue polypeptide: Malonate decarboxylase acyl carrier protein (99 aa).

The residue at position 25 (Ser-25) is an O-(phosphoribosyl dephospho-coenzyme A)serine.

The protein belongs to the MdcC family. In terms of processing, covalently binds the prosthetic group of malonate decarboxylase.

The protein localises to the cytoplasm. Subunit of malonate decarboxylase, it is an acyl carrier protein to which acetyl and malonyl thioester residues are bound via a 2'-(5''-phosphoribosyl)-3'-dephospho-CoA prosthetic group and turn over during the catalytic mechanism. The polypeptide is Malonate decarboxylase acyl carrier protein (Pseudomonas fluorescens (strain ATCC BAA-477 / NRRL B-23932 / Pf-5)).